Consider the following 195-residue polypeptide: Pyridoxal 5'-phosphate synthase subunit PdxT (195 aa).

46–48 (GES) contributes to the L-glutamine binding site. Cys-78 functions as the Nucleophile in the catalytic mechanism. L-glutamine contacts are provided by residues Arg-105 and 133–134 (IR). Catalysis depends on charge relay system residues His-169 and Glu-171.

Belongs to the glutaminase PdxT/SNO family. In the presence of PdxS, forms a dodecamer of heterodimers. Only shows activity in the heterodimer.

The enzyme catalyses aldehydo-D-ribose 5-phosphate + D-glyceraldehyde 3-phosphate + L-glutamine = pyridoxal 5'-phosphate + L-glutamate + phosphate + 3 H2O + H(+). It catalyses the reaction L-glutamine + H2O = L-glutamate + NH4(+). Its pathway is cofactor biosynthesis; pyridoxal 5'-phosphate biosynthesis. Catalyzes the hydrolysis of glutamine to glutamate and ammonia as part of the biosynthesis of pyridoxal 5'-phosphate. The resulting ammonia molecule is channeled to the active site of PdxS. This Geobacillus thermodenitrificans (strain NG80-2) protein is Pyridoxal 5'-phosphate synthase subunit PdxT.